The sequence spans 311 residues: Phosphopantothenate--cysteine ligase (311 aa).

The residue at position 2 (alanine 2) is an N-acetylalanine.

Belongs to the PPC synthetase family. In terms of assembly, homodimer.

The enzyme catalyses (R)-4'-phosphopantothenate + L-cysteine + ATP = N-[(R)-4-phosphopantothenoyl]-L-cysteine + AMP + diphosphate + H(+). The catalysed reaction is (R)-4'-phosphopantothenate + L-cysteine + CTP = N-[(R)-4-phosphopantothenoyl]-L-cysteine + CMP + diphosphate + H(+). It functions in the pathway cofactor biosynthesis; coenzyme A biosynthesis; CoA from (R)-pantothenate: step 2/5. Functionally, catalyzes the second step in the biosynthesis of coenzyme A from vitamin B5, where cysteine is conjugated to 4'-phosphopantothenate to form 4-phosphopantothenoylcysteine. Has a preference for ATP over CTP as a cosubstrate. This chain is Phosphopantothenate--cysteine ligase (Ppcs), found in Mus musculus (Mouse).